The following is a 220-amino-acid chain: Uracil phosphoribosyltransferase 2 (220 aa).

Position 77 to 80 (77 to 80 (ARDI)) interacts with GTP. 5-phospho-alpha-D-ribose 1-diphosphate contacts are provided by arginine 87 and arginine 113. Arginine 134 contributes to the GTP binding site. Residues aspartate 140 and 140 to 148 (DPLLATGNS) contribute to the 5-phospho-alpha-D-ribose 1-diphosphate site. Tyrosine 204 contacts D-ribose 5-phosphate. Residues valine 205 and 210–212 (GDF) contribute to the uracil site. Aspartate 211 lines the 5-phospho-alpha-D-ribose 1-diphosphate pocket.

This sequence belongs to the UPRTase family. It depends on Mg(2+) as a cofactor.

It catalyses the reaction UMP + diphosphate = 5-phospho-alpha-D-ribose 1-diphosphate + uracil. It participates in pyrimidine metabolism; UMP biosynthesis via salvage pathway; UMP from uracil: step 1/1. With respect to regulation, allosterically activated by GTP. Catalyzes the conversion of uracil and 5-phospho-alpha-D-ribose 1-diphosphate (PRPP) to UMP and diphosphate. This is Uracil phosphoribosyltransferase 2 from Schizosaccharomyces pombe (strain 972 / ATCC 24843) (Fission yeast).